A 122-amino-acid chain; its full sequence is Large ribosomal subunit protein uL14 (122 aa).

The protein belongs to the universal ribosomal protein uL14 family. In terms of assembly, part of the 50S ribosomal subunit. Forms a cluster with proteins L3 and L19. In the 70S ribosome, L14 and L19 interact and together make contacts with the 16S rRNA in bridges B5 and B8.

In terms of biological role, binds to 23S rRNA. Forms part of two intersubunit bridges in the 70S ribosome. The sequence is that of Large ribosomal subunit protein uL14 from Aliarcobacter butzleri (strain RM4018) (Arcobacter butzleri).